Consider the following 387-residue polypeptide: Patatin-03 (387 aa).

Residues 1 to 23 form the signal peptide; the sequence is MATTKSVLVLIFMILATTSSTFA. The region spanning 32-230 is the PNPLA domain; it reads LSIDGGGIKG…TVADPALLSV (199 aa). The GXGXXG signature appears at 36–41; the sequence is GGGIKG. The GXSXG motif lies at 75–79; that stretch reads GTSTG. Ser77 (nucleophile) is an active-site residue. 2 N-linked (GlcNAc...) asparagine glycosylation sites follow: Asn115 and Asn203. Catalysis depends on Asp216, which acts as the Proton acceptor. Positions 216 to 218 match the DGA/G motif; it reads DGA.

Belongs to the patatin family. Tuber.

It localises to the vacuole. Probable lipolytic acyl hydrolase (LAH), an activity which is thought to be involved in the response of tubers to pathogens. The polypeptide is Patatin-03 (Solanum tuberosum (Potato)).